Here is a 586-residue protein sequence, read N- to C-terminus: Serine/threonine-protein kinase TDA1 (586 aa).

Residues Met1–Gly26 form a disordered region. The region spanning Val39–Ile351 is the Protein kinase domain. ATP is bound by residues Leu45 to Val53 and Lys68. Asp180 serves as the catalytic Proton acceptor. A disordered region spans residues Thr503–Thr524. Thr504 is subject to Phosphothreonine. Phosphoserine occurs at positions 509 and 518. A Phosphothreonine modification is found at Thr538. Ser578 is subject to Phosphoserine.

The protein belongs to the protein kinase superfamily. Ser/Thr protein kinase family. Interacts with RIM11.

Its subcellular location is the cytoplasm. It is found in the nucleus. The enzyme catalyses L-seryl-[protein] + ATP = O-phospho-L-seryl-[protein] + ADP + H(+). It catalyses the reaction L-threonyl-[protein] + ATP = O-phospho-L-threonyl-[protein] + ADP + H(+). In terms of biological role, serine/threonine protein kinase shown to have protein phosphorylation activity in vitro. The protein is Serine/threonine-protein kinase TDA1 (TDA1) of Saccharomyces cerevisiae (strain ATCC 204508 / S288c) (Baker's yeast).